Reading from the N-terminus, the 599-residue chain is Elongation factor 4 (599 aa).

Residues 4–186 enclose the tr-type G domain; it reads SKIRNFSIIA…SIVEKVPAPK (183 aa). GTP is bound by residues 16–21 and 133–136; these read DHGKST and NKVD.

This sequence belongs to the TRAFAC class translation factor GTPase superfamily. Classic translation factor GTPase family. LepA subfamily.

The protein resides in the cell inner membrane. The catalysed reaction is GTP + H2O = GDP + phosphate + H(+). Its function is as follows. Required for accurate and efficient protein synthesis under certain stress conditions. May act as a fidelity factor of the translation reaction, by catalyzing a one-codon backward translocation of tRNAs on improperly translocated ribosomes. Back-translocation proceeds from a post-translocation (POST) complex to a pre-translocation (PRE) complex, thus giving elongation factor G a second chance to translocate the tRNAs correctly. Binds to ribosomes in a GTP-dependent manner. The polypeptide is Elongation factor 4 (Syntrophotalea carbinolica (strain DSM 2380 / NBRC 103641 / GraBd1) (Pelobacter carbinolicus)).